Consider the following 140-residue polypeptide: Nucleoside diphosphate kinase (140 aa).

Residues Lys-11, Phe-59, Arg-87, Thr-93, Arg-104, and Asn-114 each coordinate ATP. His-117 (pros-phosphohistidine intermediate) is an active-site residue.

This sequence belongs to the NDK family. In terms of assembly, homotetramer. It depends on Mg(2+) as a cofactor.

The protein resides in the cytoplasm. It carries out the reaction a 2'-deoxyribonucleoside 5'-diphosphate + ATP = a 2'-deoxyribonucleoside 5'-triphosphate + ADP. The enzyme catalyses a ribonucleoside 5'-diphosphate + ATP = a ribonucleoside 5'-triphosphate + ADP. In terms of biological role, major role in the synthesis of nucleoside triphosphates other than ATP. The ATP gamma phosphate is transferred to the NDP beta phosphate via a ping-pong mechanism, using a phosphorylated active-site intermediate. The sequence is that of Nucleoside diphosphate kinase from Brucella canis (strain ATCC 23365 / NCTC 10854 / RM-666).